The following is a 754-amino-acid chain: RNA exonuclease 5 (754 aa).

Residues 1–36 form a disordered region; sequence MELEEEENPRKRKETPNSALTTELDRPSWDVQDPEP. The Exonuclease domain maps to 222-370; it reads LFGLDCEVCL…EDARTALELV (149 aa). RRM domains lie at 488–562 and 583–662; these read STIY…RLLT and GTIY…RHLQ.

The protein is RNA exonuclease 5 (Rexo5) of Rattus norvegicus (Rat).